A 294-amino-acid chain; its full sequence is Glycine-rich protein 2 (294 aa).

The N-terminal stretch at 1–20 (MKMWFRLATFVTLIIEFAHC) is a signal peptide. Positions 205–221 (TGSQTGAAANGTSAGAA) are enriched in low complexity. The disordered stretch occupies residues 205 to 225 (TGSQTGAAANGTSAGAAVRGG).

Nacreous layer of shell (at protein level). Expressed primarily in the mantle with highest level in the mantle pallium and lower level in the mantle edge.

Its subcellular location is the secreted. This is Glycine-rich protein 2 from Pinctada maxima (Silver-lipped pearl oyster).